A 33-amino-acid chain; its full sequence is Photosystem II reaction center protein Psb30 (33 aa).

A helical transmembrane segment spans residues 5–25 (LIVQLGSLTLITIAGPLIVAL).

Belongs to the Psb30/Ycf12 family. As to quaternary structure, PSII is composed of 1 copy each of membrane proteins PsbA, PsbB, PsbC, PsbD, PsbE, PsbF, PsbH, PsbI, PsbJ, PsbK, PsbL, PsbM, PsbT, PsbY, PsbZ, Psb30/Ycf12, peripheral proteins of the oxygen-evolving complex and a large number of cofactors. It forms dimeric complexes.

The protein resides in the plastid. It is found in the chloroplast thylakoid membrane. Its function is as follows. A core subunit of photosystem II (PSII), probably helps stabilize the reaction center. The protein is Photosystem II reaction center protein Psb30 of Euglena mutabilis.